Reading from the N-terminus, the 362-residue chain is Putative sphingolipid delta(4)-desaturase/C4-monooxygenase (362 aa).

Helical transmembrane passes span 45-61, 71-91, and 107-127; these read YVVSSLVIFQIFMCWLL, LEAYFCGGIINHAMTLAIHDI, and FFGMWANLPIAVPISVSFKKY. Residues 89 to 93 carry the Histidine box-1 motif; that stretch reads HDISH. Residues 128-132 carry the Histidine box-2 motif; the sequence is HVEHH. The next 2 helical transmembrane spans lie at 160–177 and 198–218; these read LLWLALQPFFYGFRPLII and LLILHFFGVKSLFYLLFGTII. Positions 259 to 263 match the Histidine box-3 motif; the sequence is HVEHH.

The protein belongs to the fatty acid desaturase type 1 family. DEGS subfamily.

It localises to the membrane. It catalyses the reaction an N-acyl-15-methylhexadecasphinganine + 2 Fe(II)-[cytochrome b5] + O2 + 2 H(+) = an N-acyl-4-hydroxy-15-methylhexadecasphinganine + 2 Fe(III)-[cytochrome b5] + H2O. The catalysed reaction is an N-acyl-15-methylhexadecasphinganine + 2 Fe(II)-[cytochrome b5] + O2 + 2 H(+) = an N-acyl-15-methylhexadecasphing-4-enine + 2 Fe(III)-[cytochrome b5] + 2 H2O. The enzyme catalyses a dihydroceramide + 2 Fe(II)-[cytochrome b5] + O2 + 2 H(+) = a phytoceramide + 2 Fe(III)-[cytochrome b5] + H2O. It carries out the reaction an N-acylsphinganine + 2 Fe(II)-[cytochrome b5] + O2 + 2 H(+) = an N-acylsphing-4-enine + 2 Fe(III)-[cytochrome b5] + 2 H2O. It catalyses the reaction N-octanoylsphinganine + 2 Fe(II)-[cytochrome b5] + O2 + 2 H(+) = N-octanoyl-4-hydroxysphinganine + 2 Fe(III)-[cytochrome b5] + H2O. The catalysed reaction is an N-acylsphinganine + 2 Fe(II)-[cytochrome b5] + O2 + 2 H(+) = an N-acyl-(4R)-4-hydroxysphinganine + 2 Fe(III)-[cytochrome b5] + H2O. It functions in the pathway lipid metabolism; sphingolipid metabolism. In terms of biological role, bifunctional enzyme which acts both as a sphingolipid delta(4)-desaturase and a sphingolipid C4-monooxygenase. C.elegans contain specific sphingoid bases, which are unique or different in structure compared to the sphingoid bases found in other animals. Two examples of these distinctive compounds are: 15-methylhexadecasphinganine and 15-methylhexadecasphing-4-enine and this enzyme can catalyze their conversion. The sequence is that of Putative sphingolipid delta(4)-desaturase/C4-monooxygenase (ttm-5) from Caenorhabditis elegans.